Reading from the N-terminus, the 194-residue chain is Peptidyl-tRNA hydrolase (194 aa).

A tRNA-binding site is contributed by Tyr17. The active-site Proton acceptor is His22. Residues Tyr68, Asn70, and Asn116 each coordinate tRNA.

Belongs to the PTH family. As to quaternary structure, monomer.

It localises to the cytoplasm. It carries out the reaction an N-acyl-L-alpha-aminoacyl-tRNA + H2O = an N-acyl-L-amino acid + a tRNA + H(+). Its function is as follows. Hydrolyzes ribosome-free peptidyl-tRNAs (with 1 or more amino acids incorporated), which drop off the ribosome during protein synthesis, or as a result of ribosome stalling. Catalyzes the release of premature peptidyl moieties from peptidyl-tRNA molecules trapped in stalled 50S ribosomal subunits, and thus maintains levels of free tRNAs and 50S ribosomes. The chain is Peptidyl-tRNA hydrolase from Pseudomonas syringae pv. tomato (strain ATCC BAA-871 / DC3000).